We begin with the raw amino-acid sequence, 207 residues long: Cytochrome c oxidase subunit 3 (207 aa).

5 helical membrane passes run 28 to 48, 70 to 90, 102 to 122, 144 to 164, and 186 to 206; these read FLGF…LFAT, VVFM…YAIY, LWFG…IYEF, LVGT…TLMI, and WHFI…MGMV.

It belongs to the cytochrome c oxidase subunit 3 family.

It localises to the cell membrane. It carries out the reaction 4 Fe(II)-[cytochrome c] + O2 + 8 H(+)(in) = 4 Fe(III)-[cytochrome c] + 2 H2O + 4 H(+)(out). The polypeptide is Cytochrome c oxidase subunit 3 (ctaE) (Bacillus sp. (strain PS3)).